Consider the following 676-residue polypeptide: RNA helicase NPH-II (676 aa).

The Helicase ATP-binding domain maps to 172 to 347; it reads FSAWISHRPV…VFLPNPAFIH (176 aa). 185–192 provides a ligand contact to ATP; that stretch reads GGTGVGKT. The short motif at 296-299 is the DEXH box element; sequence DEVH. One can recognise a Helicase C-terminal domain in the interval 366-535; that stretch reads NPSSRMAYIE…NYILYANKFN (170 aa).

This sequence belongs to the DEAD box helicase family. DEAH subfamily. Monomer.

The protein resides in the virion. The enzyme catalyses ATP + H2O = ADP + phosphate + H(+). Functionally, NTP-dependent helicase that catalyzes unidirectional unwinding of 3'tailed duplex RNAs and plays an important role during transcription of early mRNAs, presumably by preventing R-loop formation behind the elongating RNA polymerase. Might also play a role in the export of newly synthesized mRNA chains out of the core into the cytoplasm. Required for replication and propagation of viral particles. The chain is RNA helicase NPH-II (OPG084) from Homo sapiens (Human).